We begin with the raw amino-acid sequence, 175 residues long: Large ribosomal subunit protein uL10 (175 aa).

The protein belongs to the universal ribosomal protein uL10 family. Part of the ribosomal stalk of the 50S ribosomal subunit. The N-terminus interacts with L11 and the large rRNA to form the base of the stalk. The C-terminus forms an elongated spine to which L12 dimers bind in a sequential fashion forming a multimeric L10(L12)X complex.

Functionally, forms part of the ribosomal stalk, playing a central role in the interaction of the ribosome with GTP-bound translation factors. In Prochlorococcus marinus (strain MIT 9313), this protein is Large ribosomal subunit protein uL10.